The primary structure comprises 942 residues: Genome polyprotein (942 aa).

Positions 1–90 (ETEITPYGEN…VDVGGLYIHN (90 aa)) constitute a Peptidase C4 domain. Cys26 functions as the For nuclear inclusion protein A activity in the catalytic mechanism. The 124-residue stretch at 349–472 (EWFIDADGSQ…NANEEAKEVV (124 aa)) folds into the RdRp catalytic domain. Positions 633 to 678 (NATSTSDTIPPARNVGADTTTPAKANPPSGRRPSSRSLIDNSIGGN) are disordered. Over residues 659 to 669 (PPSGRRPSSRS) the composition is skewed to low complexity.

This sequence belongs to the potyviridae genome polyprotein family. Genome polyprotein of potyviruses undergoes post-translational proteolytic processing by the main proteinase NIa-pro resulting in the production of at least ten individual proteins. The P1 proteinase and the HC-pro cleave only their respective C-termini autocatalytically. 6K1 is essential for proper proteolytic separation of P3 from CI.

Its subcellular location is the virion. It carries out the reaction RNA(n) + a ribonucleoside 5'-triphosphate = RNA(n+1) + diphosphate. It catalyses the reaction Hydrolyzes glutaminyl bonds, and activity is further restricted by preferences for the amino acids in P6 - P1' that vary with the species of potyvirus, e.g. Glu-Xaa-Xaa-Tyr-Xaa-Gln-|-(Ser or Gly) for the enzyme from tobacco etch virus. The natural substrate is the viral polyprotein, but other proteins and oligopeptides containing the appropriate consensus sequence are also cleaved.. Has RNA-binding and proteolytic activities. Its function is as follows. An RNA-dependent RNA polymerase that plays an essential role in the virus replication. Functionally, involved in aphid transmission, cell-to-cell and systemis movement, encapsidation of the viral RNA and in the regulation of viral RNA amplification. The protein is Genome polyprotein of Brome streak virus (strain German) (BStV).